The sequence spans 324 residues: D-alanine--D-alanine ligase (324 aa).

One can recognise an ATP-grasp domain in the interval 121-321 (NQYLKAFGVR…IKDVMTDIIE (201 aa)). Residue 149-204 (MEKIGLPCFIKPSLGGSSFGVTKVKTKEQIQPAIVKAFEEAQEVLVEAFMEGTELT) coordinates ATP. Residues aspartate 275, glutamate 288, and asparagine 290 each coordinate Mg(2+).

Belongs to the D-alanine--D-alanine ligase family. Mg(2+) is required as a cofactor. The cofactor is Mn(2+).

The protein localises to the cytoplasm. It carries out the reaction 2 D-alanine + ATP = D-alanyl-D-alanine + ADP + phosphate + H(+). Its pathway is cell wall biogenesis; peptidoglycan biosynthesis. Cell wall formation. The sequence is that of D-alanine--D-alanine ligase from Bacteroides thetaiotaomicron (strain ATCC 29148 / DSM 2079 / JCM 5827 / CCUG 10774 / NCTC 10582 / VPI-5482 / E50).